A 242-amino-acid chain; its full sequence is Triosephosphate isomerase (242 aa).

Position 8–10 (8–10 (NWK)) interacts with substrate. The Electrophile role is filled by His98. Residue Glu167 is the Proton acceptor of the active site. Substrate is bound by residues Gly173, Ser205, and 226–227 (GG).

It belongs to the triosephosphate isomerase family. Homodimer.

The protein localises to the cytoplasm. It catalyses the reaction D-glyceraldehyde 3-phosphate = dihydroxyacetone phosphate. Its pathway is carbohydrate biosynthesis; gluconeogenesis. It functions in the pathway carbohydrate degradation; glycolysis; D-glyceraldehyde 3-phosphate from glycerone phosphate: step 1/1. Functionally, involved in the gluconeogenesis. Catalyzes stereospecifically the conversion of dihydroxyacetone phosphate (DHAP) to D-glyceraldehyde-3-phosphate (G3P). The sequence is that of Triosephosphate isomerase from Mesomycoplasma hyopneumoniae (strain 232) (Mycoplasma hyopneumoniae).